The chain runs to 386 residues: Zinc finger protein 385A (386 aa).

The Matrin-type 1 zinc-finger motif lies at 74–98 (ISCNVCQIRFNSQSQAEAHYKGNRH). The interval 88–193 (QAEAHYKGNR…ASLPGGSKEE (106 aa)) is disordered. The segment covering 103-121 (KGIEAAKTRGREPSVRESG) has biased composition (basic and acidic residues). Positions 145–351 (NGLGPAPGSP…AGSPLSLRPA (207 aa)) are necessary for binding to ITPR1, CEBPA and p53/TP53 mRNAs. A Phosphoserine modification is found at serine 185. The Matrin-type 2 zinc-finger motif lies at 201–225 (LYCALCKVAVNSLSQLEAHNKGTKH). Threonine 248 is subject to Phosphothreonine. A Matrin-type 3 zinc finger spans residues 261–285 (FHCEICNVKVNSEVQLKQHISSRRH). Residues 279 to 305 (HISSRRHRDGVAGKPNPLLSRHKKPRG) are disordered.

In terms of assembly, interacts with p53/TP53; the interaction is direct and enhances p53/TP53 transactivation functions on cell-cycle arrest target genes, resulting in growth arrest. Interacts with ELAVL1; the interaction is indirect, mRNA-dependent and may regulate p53/TP53 expression. Post-translationally, ubiquitinated upon prolonged exposure to genotoxic stress, which leads to proteasomal degradation of ZNF385A and releases p53/TP53 from cell-cycle arrest target gene promoters. Expressed in brain and testis (at protein level). In brain, the expression is located to olfactory bulb, cerebral cortex, hippocampus, satellite cells and Purkinje cells of the cerebellum molecular layer. Detected in bone marrow, white and brown adipose tissue, lung and at lower levels in the thymus.

It is found in the cytoplasm. The protein localises to the nucleus. Its subcellular location is the nucleolus. It localises to the cell projection. The protein resides in the dendrite. In terms of biological role, RNA-binding protein that affects the localization and the translation of a subset of mRNA. May play a role in adipogenesis through binding to the 3'-UTR of CEBPA mRNA and regulation of its translation. Targets ITPR1 mRNA to dendrites in Purkinje cells, and may regulate its activity-dependent translation. With ELAVL1, binds the 3'-UTR of p53/TP53 mRNAs to control their nuclear export induced by CDKN2A. Hence, may regulate p53/TP53 expression and mediate in part the CDKN2A anti-proliferative activity. May also bind CCNB1 mRNA. Alternatively, may also regulate p53/TP53 activity through direct protein-protein interaction. Interacts with p53/TP53 and promotes cell-cycle arrest over apoptosis enhancing preferentially the DNA binding and transactivation of p53/TP53 on cell-cycle arrest target genes over proapoptotic target genes. May also regulate the ubiquitination and stability of CDKN1A promoting DNA damage-induced cell cycle arrest. Also plays a role in megakaryocytes differentiation. This Mus musculus (Mouse) protein is Zinc finger protein 385A (Znf385a).